A 551-amino-acid chain; its full sequence is Probable terpene synthase 8 (551 aa).

3 residues coordinate Mg(2+): Asp307, Asp311, and Glu457. Residues 307-311 (DDTYD) carry the DDXXD motif motif.

This sequence belongs to the terpene synthase family. It depends on Mg(2+) as a cofactor.

In terms of biological role, probable sesquiterpene synthase. The sequence is that of Probable terpene synthase 8 (TPS8) from Ricinus communis (Castor bean).